The chain runs to 275 residues: 4-hydroxy-tetrahydrodipicolinate reductase (275 aa).

NAD(+) contacts are provided by residues 8–13 (GATGRM), 100–102 (GTT), and 126–129 (SPNM). The active-site Proton donor/acceptor is the His160. His161 provides a ligand contact to (S)-2,3,4,5-tetrahydrodipicolinate. Lys164 acts as the Proton donor in catalysis. (S)-2,3,4,5-tetrahydrodipicolinate is bound at residue 170 to 171 (GT).

The protein belongs to the DapB family.

It is found in the cytoplasm. It carries out the reaction (S)-2,3,4,5-tetrahydrodipicolinate + NAD(+) + H2O = (2S,4S)-4-hydroxy-2,3,4,5-tetrahydrodipicolinate + NADH + H(+). The enzyme catalyses (S)-2,3,4,5-tetrahydrodipicolinate + NADP(+) + H2O = (2S,4S)-4-hydroxy-2,3,4,5-tetrahydrodipicolinate + NADPH + H(+). It functions in the pathway amino-acid biosynthesis; L-lysine biosynthesis via DAP pathway; (S)-tetrahydrodipicolinate from L-aspartate: step 4/4. In terms of biological role, catalyzes the conversion of 4-hydroxy-tetrahydrodipicolinate (HTPA) to tetrahydrodipicolinate. This chain is 4-hydroxy-tetrahydrodipicolinate reductase, found in Methanopyrus kandleri (strain AV19 / DSM 6324 / JCM 9639 / NBRC 100938).